A 277-amino-acid chain; its full sequence is Multiple sugar-binding transport system permease protein MsmG (277 aa).

The next 6 membrane-spanning stretches (helical) occupy residues 13 to 33, 74 to 94, 110 to 130, 141 to 161, 198 to 218, and 243 to 263; these read YVLL…TVFS, VITV…AYSI, LLIL…TVMM, LIIL…VGYI, TTLI…LLIL, and GPSF…YLIF. Residues 69–263 form the ABC transmembrane type-1 domain; the sequence is FWNSTVITVL…ITITIVYLIF (195 aa).

The protein belongs to the binding-protein-dependent transport system permease family. MalFG subfamily.

The protein resides in the cell membrane. Functionally, involved in a binding protein-dependent transport system responsible for the uptake of melibiose, raffinose and isomaltotriose. In Streptococcus mutans serotype c (strain ATCC 700610 / UA159), this protein is Multiple sugar-binding transport system permease protein MsmG (msmG).